Here is a 212-residue protein sequence, read N- to C-terminus: Nucleoside diphosphate kinase homolog 5 (212 aa).

The NDK stretch occupies residues 13–145 (EKTLAIIKPD…EREIRFMFPE (133 aa)).

It belongs to the NDK family. As to quaternary structure, component of the axonemal radial spoke complex 1 (RS1), at least composed of spoke head proteins RSPH1, RSPH3, RSPH9 and the cilia-specific component RSPH4A or sperm-specific component RSPH6A, spoke stalk proteins RSPH14, DNAJB13, DYDC1, ROPN1L and NME5, and the anchor protein IQUB. Interacts with IQUB. As to expression, specifically expressed in testis germinal cells.

It is found in the cell projection. Its subcellular location is the cilium. It localises to the cytoplasm. The protein resides in the cytoskeleton. The protein localises to the flagellum axoneme. Its function is as follows. Functions as part of axonemal radial spoke complexes that play an important part in the motility of sperm and cilia. Does not seem to have nucleoside diphosphate kinase (NDPK) activity. Confers protection from cell death by BAX and alters the cellular levels of several antioxidant enzymes including GPX5. May play a role in spermiogenesis by increasing the ability of late-stage spermatids to eliminate reactive oxygen species. Exhibits a 3'-5' exonuclease activity with a preference for single-stranded DNA, suggesting roles in DNA proofreading and repair. In Homo sapiens (Human), this protein is Nucleoside diphosphate kinase homolog 5.